The chain runs to 172 residues: Lipoprotein signal peptidase (172 aa).

Helical transmembrane passes span 70-90 (ERWL…AWIW) and 94-114 (AKGD…NIAD). Active-site residues include D123 and D142. Residues 134–154 (PFLVFNVADAAITIGVLILVL) form a helical membrane-spanning segment.

It belongs to the peptidase A8 family.

It is found in the cell inner membrane. The enzyme catalyses Release of signal peptides from bacterial membrane prolipoproteins. Hydrolyzes -Xaa-Yaa-Zaa-|-(S,diacylglyceryl)Cys-, in which Xaa is hydrophobic (preferably Leu), and Yaa (Ala or Ser) and Zaa (Gly or Ala) have small, neutral side chains.. It participates in protein modification; lipoprotein biosynthesis (signal peptide cleavage). Functionally, this protein specifically catalyzes the removal of signal peptides from prolipoproteins. In Rhizorhabdus wittichii (strain DSM 6014 / CCUG 31198 / JCM 15750 / NBRC 105917 / EY 4224 / RW1) (Sphingomonas wittichii), this protein is Lipoprotein signal peptidase.